The primary structure comprises 196 residues: Carnitine operon protein CaiE (196 aa).

The tract at residues 177–196 (RQMEENRPRLQGTTDVMPKR) is disordered.

Belongs to the transferase hexapeptide repeat family.

It functions in the pathway amine and polyamine metabolism; carnitine metabolism. Functionally, overproduction of CaiE stimulates the activity of CaiB and CaiD. The sequence is that of Carnitine operon protein CaiE from Escherichia coli O17:K52:H18 (strain UMN026 / ExPEC).